A 164-amino-acid chain; its full sequence is MEMLQGLLLCLLLSTGGAWASNEPLRPLCRPTHAILAAEKEGCPVCVAFNTTICAGYCSSMVRVLQTVMPPLPQLVCNYHELRFTSVRLPGCRRGVNPVVYFPVAVSCRCALCRRSYSDCGNLKSEPLGCDYHTSQDSSSKDPPRNLTSPSQLPEPADAPLVPQ.

A signal peptide spans 1-20 (MEMLQGLLLCLLLSTGGAWA). 6 cysteine pairs are disulfide-bonded: Cys-29–Cys-77, Cys-43–Cys-92, Cys-46–Cys-130, Cys-54–Cys-108, Cys-58–Cys-110, and Cys-113–Cys-120. N-linked (GlcNAc...) asparagine glycosylation occurs at Asn-50. The interval 133–164 (HTSQDSSSKDPPRNLTSPSQLPEPADAPLVPQ) is disordered. O-linked (GalNAc...) serine glycosylation is present at Ser-140. The N-linked (GlcNAc...) asparagine glycan is linked to Asn-146. Ser-151 carries an O-linked (GalNAc...) serine glycan.

Belongs to the glycoprotein hormones subunit beta family. Heterodimer of a common alpha chain and a unique beta chain which confers biological specificity to thyrotropin, lutropin, follitropin and gonadotropin.

Its subcellular location is the secreted. Stimulates the ovaries to synthesize the steroids that are essential for the maintenance of pregnancy. The chain is Choriogonadotropin subunit beta (CGB) from Aotus nancymaae (Ma's night monkey).